An 85-amino-acid polypeptide reads, in one-letter code: uncharacterized protein (85 aa).

Residues 1 to 85 (MRWRPSSWSA…DQEQCGQHCR (85 aa)) are disordered. The segment covering 47 to 61 (ASVEGEGGRHADRHG) has biased composition (basic and acidic residues).

This is an uncharacterized protein from Streptomyces lividans.